A 271-amino-acid chain; its full sequence is DNA-directed RNA polymerase subunit Rpo3 (271 aa).

The protein belongs to the archaeal Rpo3/eukaryotic RPB3 RNA polymerase subunit family. In terms of assembly, part of the RNA polymerase complex.

It is found in the cytoplasm. It carries out the reaction RNA(n) + a ribonucleoside 5'-triphosphate = RNA(n+1) + diphosphate. Functionally, DNA-dependent RNA polymerase (RNAP) catalyzes the transcription of DNA into RNA using the four ribonucleoside triphosphates as substrates. The polypeptide is DNA-directed RNA polymerase subunit Rpo3 (Picrophilus torridus (strain ATCC 700027 / DSM 9790 / JCM 10055 / NBRC 100828 / KAW 2/3)).